The primary structure comprises 94 residues: Small ribosomal subunit protein bS18 (94 aa).

It belongs to the bacterial ribosomal protein bS18 family. In terms of assembly, part of the 30S ribosomal subunit. Forms a tight heterodimer with protein bS6.

Binds as a heterodimer with protein bS6 to the central domain of the 16S rRNA, where it helps stabilize the platform of the 30S subunit. The chain is Small ribosomal subunit protein bS18 from Albidiferax ferrireducens (strain ATCC BAA-621 / DSM 15236 / T118) (Rhodoferax ferrireducens).